The chain runs to 504 residues: Probable cytochrome P450 6a21 (504 aa).

Cysteine 449 is a binding site for heme.

It belongs to the cytochrome P450 family. Heme serves as cofactor.

Its subcellular location is the endoplasmic reticulum membrane. The protein resides in the microsome membrane. In terms of biological role, may be involved in the metabolism of insect hormones and in the breakdown of synthetic insecticides. This Drosophila melanogaster (Fruit fly) protein is Probable cytochrome P450 6a21 (Cyp6a21).